Consider the following 287-residue polypeptide: Diaminopimelate epimerase (287 aa).

Substrate contacts are provided by Asn-15 and Asn-66. The active-site Proton donor is Cys-75. Substrate contacts are provided by residues 76-77 (GN), Asn-170, Asn-203, and 221-222 (ER). Cys-230 functions as the Proton acceptor in the catalytic mechanism. Residue 231 to 232 (GT) coordinates substrate.

This sequence belongs to the diaminopimelate epimerase family. In terms of assembly, homodimer.

The protein resides in the cytoplasm. The enzyme catalyses (2S,6S)-2,6-diaminopimelate = meso-2,6-diaminopimelate. It functions in the pathway amino-acid biosynthesis; L-lysine biosynthesis via DAP pathway; DL-2,6-diaminopimelate from LL-2,6-diaminopimelate: step 1/1. Catalyzes the stereoinversion of LL-2,6-diaminopimelate (L,L-DAP) to meso-diaminopimelate (meso-DAP), a precursor of L-lysine and an essential component of the bacterial peptidoglycan. In Desulfovibrio desulfuricans (strain ATCC 27774 / DSM 6949 / MB), this protein is Diaminopimelate epimerase.